The primary structure comprises 254 residues: Imidazole glycerol phosphate synthase subunit HisF (254 aa).

Catalysis depends on residues Asp-12 and Asp-131.

Belongs to the HisA/HisF family. Heterodimer of HisH and HisF.

The protein resides in the cytoplasm. It carries out the reaction 5-[(5-phospho-1-deoxy-D-ribulos-1-ylimino)methylamino]-1-(5-phospho-beta-D-ribosyl)imidazole-4-carboxamide + L-glutamine = D-erythro-1-(imidazol-4-yl)glycerol 3-phosphate + 5-amino-1-(5-phospho-beta-D-ribosyl)imidazole-4-carboxamide + L-glutamate + H(+). The protein operates within amino-acid biosynthesis; L-histidine biosynthesis; L-histidine from 5-phospho-alpha-D-ribose 1-diphosphate: step 5/9. Functionally, IGPS catalyzes the conversion of PRFAR and glutamine to IGP, AICAR and glutamate. The HisF subunit catalyzes the cyclization activity that produces IGP and AICAR from PRFAR using the ammonia provided by the HisH subunit. This is Imidazole glycerol phosphate synthase subunit HisF from Kocuria rhizophila (strain ATCC 9341 / DSM 348 / NBRC 103217 / DC2201).